Here is a 231-residue protein sequence, read N- to C-terminus: Probable glutathione S-transferase (231 aa).

The GST N-terminal domain maps to 4-96; sequence PNFELYGYFR…YLEEALPTNA (93 aa). Glutathione contacts are provided by residues Ser-14, Gln-43, Val-57, 80 to 81, Gln-124, and 128 to 130; these read QS and NLK. A GST C-terminal domain is found at 105 to 227; that stretch reads NPVARAHVRT…HWQKQEDTPE (123 aa).

This sequence belongs to the GST superfamily. Zeta family. As to quaternary structure, homodimer.

The enzyme catalyses RX + glutathione = an S-substituted glutathione + a halide anion + H(+). Its function is as follows. Probable glutathione S-transferase. The polypeptide is Probable glutathione S-transferase (Coccidioides immitis (strain RS) (Valley fever fungus)).